The sequence spans 122 residues: Large ribosomal subunit protein uL29B (122 aa).

Residues 10 to 69 (QLGIKQIEERAAEIKAELAALRQKKNSGDVGANDIKTAKKNLARALTVRREKILEELVEA) adopt a coiled-coil conformation.

The protein belongs to the universal ribosomal protein uL29 family. Component of the large ribosomal subunit.

It is found in the cytoplasm. The chain is Large ribosomal subunit protein uL29B (RPL35C) from Encephalitozoon cuniculi (strain GB-M1) (Microsporidian parasite).